We begin with the raw amino-acid sequence, 450 residues long: Probable malate:quinone oxidoreductase (450 aa).

This sequence belongs to the MQO family. It depends on FAD as a cofactor.

It catalyses the reaction (S)-malate + a quinone = a quinol + oxaloacetate. It functions in the pathway carbohydrate metabolism; tricarboxylic acid cycle; oxaloacetate from (S)-malate (quinone route): step 1/1. This Helicobacter acinonychis (strain Sheeba) protein is Probable malate:quinone oxidoreductase.